A 341-amino-acid polypeptide reads, in one-letter code: DnaJ homolog subfamily C member 22 (341 aa).

One can recognise a TM2 domain in the interval 3 to 50; the sequence is KGLLVTYALWAVGGPAGLHHLYLGRDSHALLWMLTLGGGGLGWLWEFW. 7 consecutive transmembrane segments (helical) span residues 5–25, 30–50, 81–101, 105–125, 135–155, 185–205, and 218–238; these read LLVT…HLYL, HALL…WEFW, FAAQ…SLSS, FYIV…AAVG, LGAA…ILPI, LGLA…CNTA, and FLNW…VLLL. One can recognise a J domain in the interval 277-341; sequence LAYQVLGLSE…QPRKPRGSRR (65 aa).

It is found in the membrane. In terms of biological role, may function as a co-chaperone. This is DnaJ homolog subfamily C member 22 (DNAJC22) from Pongo abelii (Sumatran orangutan).